A 546-amino-acid polypeptide reads, in one-letter code: Phosphoglucomutase (546 aa).

Ser135 acts as the Phosphoserine intermediate in catalysis. 4 residues coordinate Mg(2+): Ser135, Asp288, Asp290, and Asp292.

It belongs to the phosphohexose mutase family. It depends on Mg(2+) as a cofactor.

It carries out the reaction alpha-D-glucose 1-phosphate = alpha-D-glucose 6-phosphate. The protein operates within glycolipid metabolism; diglucosyl-diacylglycerol biosynthesis. In terms of biological role, catalyzes the interconversion between glucose-6-phosphate and alpha-glucose-1-phosphate. This is the first step in the biosynthesis of diglucosyl-diacylglycerol (Glc2-DAG), i.e. a glycolipid found in the membrane, which is also used as a membrane anchor for lipoteichoic acid (LTA). This Staphylococcus epidermidis (strain ATCC 35984 / DSM 28319 / BCRC 17069 / CCUG 31568 / BM 3577 / RP62A) protein is Phosphoglucomutase (pgcA).